The sequence spans 262 residues: Flap endonuclease Xni (262 aa).

A Mg(2+)-binding site is contributed by aspartate 105. In terms of domain architecture, 5'-3' exonuclease spans 162–259 (ERSQFLDLMA…VIDSQPEKTI (98 aa)). Leucine 172, alanine 173, proline 181, isoleucine 183, and isoleucine 186 together coordinate K(+). Residues 185-190 (GIGPKS) form an interaction with DNA region.

This sequence belongs to the Xni family. Requires Mg(2+) as cofactor. It depends on K(+) as a cofactor.

Has flap endonuclease activity. During DNA replication, flap endonucleases cleave the 5'-overhanging flap structure that is generated by displacement synthesis when DNA polymerase encounters the 5'-end of a downstream Okazaki fragment. The chain is Flap endonuclease Xni from Shewanella baltica (strain OS185).